The following is an 873-amino-acid chain: Alanine--tRNA ligase (873 aa).

His563, His567, Cys664, and His668 together coordinate Zn(2+).

It belongs to the class-II aminoacyl-tRNA synthetase family. It depends on Zn(2+) as a cofactor.

Its subcellular location is the cytoplasm. It carries out the reaction tRNA(Ala) + L-alanine + ATP = L-alanyl-tRNA(Ala) + AMP + diphosphate. Catalyzes the attachment of alanine to tRNA(Ala) in a two-step reaction: alanine is first activated by ATP to form Ala-AMP and then transferred to the acceptor end of tRNA(Ala). Also edits incorrectly charged Ser-tRNA(Ala) and Gly-tRNA(Ala) via its editing domain. The protein is Alanine--tRNA ligase of Aromatoleum aromaticum (strain DSM 19018 / LMG 30748 / EbN1) (Azoarcus sp. (strain EbN1)).